Here is a 253-residue protein sequence, read N- to C-terminus: Endonuclease NucS (253 aa).

This sequence belongs to the NucS endonuclease family.

Its subcellular location is the cytoplasm. In terms of biological role, cleaves both 3' and 5' ssDNA extremities of branched DNA structures. The chain is Endonuclease NucS from Pyrococcus horikoshii (strain ATCC 700860 / DSM 12428 / JCM 9974 / NBRC 100139 / OT-3).